A 130-amino-acid chain; its full sequence is DNA-directed RNA polymerase subunit omega (130 aa).

Disordered stretches follow at residues Pro80–Asp99 and Glu110–Glu130. The span at Glu110–Glu124 shows a compositional bias: basic and acidic residues.

The protein belongs to the RNA polymerase subunit omega family. The RNAP catalytic core consists of 2 alpha, 1 beta, 1 beta' and 1 omega subunit. When a sigma factor is associated with the core the holoenzyme is formed, which can initiate transcription.

The catalysed reaction is RNA(n) + a ribonucleoside 5'-triphosphate = RNA(n+1) + diphosphate. Functionally, promotes RNA polymerase assembly. Latches the N- and C-terminal regions of the beta' subunit thereby facilitating its interaction with the beta and alpha subunits. The polypeptide is DNA-directed RNA polymerase subunit omega (Nitrobacter hamburgensis (strain DSM 10229 / NCIMB 13809 / X14)).